The sequence spans 339 residues: 3-isopropylmalate dehydrogenase (339 aa).

Substrate is bound by residues Arg-88, Arg-98, Arg-122, and Asp-212. Mg(2+) contacts are provided by Asp-212, Asp-236, and Asp-240. 272–284 (GSAPDIAGQGIAD) contacts NAD(+).

Belongs to the isocitrate and isopropylmalate dehydrogenases family. LeuB type 2 subfamily. Homodimer. Mg(2+) serves as cofactor. It depends on Mn(2+) as a cofactor.

Its subcellular location is the cytoplasm. The catalysed reaction is (2R,3S)-3-isopropylmalate + NAD(+) = 4-methyl-2-oxopentanoate + CO2 + NADH. Its pathway is amino-acid biosynthesis; L-leucine biosynthesis; L-leucine from 3-methyl-2-oxobutanoate: step 3/4. Functionally, catalyzes the oxidation of 3-carboxy-2-hydroxy-4-methylpentanoate (3-isopropylmalate) to 3-carboxy-4-methyl-2-oxopentanoate. The product decarboxylates to 4-methyl-2 oxopentanoate. The chain is 3-isopropylmalate dehydrogenase from Corynebacterium urealyticum (strain ATCC 43042 / DSM 7109).